A 327-amino-acid chain; its full sequence is Delta-aminolevulinic acid dehydratase (327 aa).

Zn(2+) is bound by residues Cys-119, Cys-121, and Cys-129. The active-site Schiff-base intermediate with substrate is Lys-198. Residues Arg-208 and Arg-220 each contribute to the 5-aminolevulinate site. Residue Glu-236 participates in Mg(2+) binding. The active-site Schiff-base intermediate with substrate is Lys-251. 5-aminolevulinate-binding residues include Ser-277 and Tyr-316.

The protein belongs to the ALAD family. In terms of assembly, homooctamer. Zn(2+) serves as cofactor.

It carries out the reaction 2 5-aminolevulinate = porphobilinogen + 2 H2O + H(+). It functions in the pathway porphyrin-containing compound metabolism; protoporphyrin-IX biosynthesis; coproporphyrinogen-III from 5-aminolevulinate: step 1/4. Catalyzes an early step in the biosynthesis of tetrapyrroles. Binds two molecules of 5-aminolevulinate per subunit, each at a distinct site, and catalyzes their condensation to form porphobilinogen. The sequence is that of Delta-aminolevulinic acid dehydratase (hemB) from Synechocystis sp. (strain ATCC 27184 / PCC 6803 / Kazusa).